A 454-amino-acid polypeptide reads, in one-letter code: Dihydrolipoyllysine-residue succinyltransferase component of 2-oxoglutarate dehydrogenase complex, mitochondrial (454 aa).

Residues 1-68 (MLSRSRCVSR…RFFQTTAVCK (68 aa)) constitute a mitochondrion transit peptide. The region spanning 71–145 (VITVQTPAFA…EGGTPLFTLR (75 aa)) is the Lipoyl-binding domain. A Phosphoserine modification is found at Ser82. Residue Lys111 is modified to N6-lipoyllysine. Positions 147–227 (TGAAPAKAKP…KGLRSEHREK (81 aa)) are disordered. Positions 149 to 163 (AAPAKAKPAETPAPA) are enriched in low complexity. Lys155 is subject to N6-acetyllysine. Residues 186–197 (PPVPSPSQPPSS) are compositionally biased toward pro residues. Low complexity predominate over residues 198-217 (KPVSAIKPTAAPPLAEAGAA). Residues Lys268, Lys273, Lys274, Lys278, and Lys308 each carry the N6-acetyllysine modification. Active-site residues include His425 and Asp429.

This sequence belongs to the 2-oxoacid dehydrogenase family. As to quaternary structure, the 2-oxoglutarate dehydrogenase complex is composed of OGDH (2-oxoglutarate dehydrogenase; E1), DLST (dihydrolipoamide succinyltransferase; E2), DLD (dihydrolipoamide dehydrogenase; E3) and the assembly factor KGD4. It contains multiple copies of the three enzymatic components (E1, E2 and E3). In the nucleus, the 2-oxoglutarate dehydrogenase complex associates with KAT2A. Interacts with ABHD11; this interaction maintains the functional lipoylation of the 2-oxoglutarate dehydrogenase complex. (R)-lipoate is required as a cofactor.

It localises to the mitochondrion matrix. It is found in the nucleus. The enzyme catalyses N(6)-[(R)-dihydrolipoyl]-L-lysyl-[protein] + succinyl-CoA = N(6)-[(R)-S(8)-succinyldihydrolipoyl]-L-lysyl-[protein] + CoA. The protein operates within amino-acid degradation; L-lysine degradation via saccharopine pathway; glutaryl-CoA from L-lysine: step 6/6. It participates in carbohydrate metabolism; tricarboxylic acid cycle. Functionally, dihydrolipoamide succinyltransferase (E2) component of the 2-oxoglutarate dehydrogenase complex. The 2-oxoglutarate dehydrogenase complex catalyzes the overall conversion of 2-oxoglutarate to succinyl-CoA and CO(2). The 2-oxoglutarate dehydrogenase complex is mainly active in the mitochondrion. A fraction of the 2-oxoglutarate dehydrogenase complex also localizes in the nucleus and is required for lysine succinylation of histones: associates with KAT2A on chromatin and provides succinyl-CoA to histone succinyltransferase KAT2A. The chain is Dihydrolipoyllysine-residue succinyltransferase component of 2-oxoglutarate dehydrogenase complex, mitochondrial from Mus musculus (Mouse).